The sequence spans 232 residues: Large ribosomal subunit protein uL16m (232 aa).

The N-terminal 41 residues, 1-41 (MFPYLTRMNLSIKMGGLTLKESSPNAFLNNTTIARRFKHEY), are a transit peptide targeting the mitochondrion.

It belongs to the universal ribosomal protein uL16 family. In terms of assembly, component of the mitochondrial large ribosomal subunit (mt-LSU). Mature yeast 74S mitochondrial ribosomes consist of a small (37S) and a large (54S) subunit. The 37S small subunit contains a 15S ribosomal RNA (15S mt-rRNA) and 34 different proteins. The 54S large subunit contains a 21S rRNA (21S mt-rRNA) and 46 different proteins.

Its subcellular location is the mitochondrion. Its function is as follows. Component of the mitochondrial ribosome (mitoribosome), a dedicated translation machinery responsible for the synthesis of mitochondrial genome-encoded proteins, including at least some of the essential transmembrane subunits of the mitochondrial respiratory chain. The mitoribosomes are attached to the mitochondrial inner membrane and translation products are cotranslationally integrated into the membrane. The sequence is that of Large ribosomal subunit protein uL16m (MRPL16) from Saccharomyces cerevisiae (strain ATCC 204508 / S288c) (Baker's yeast).